A 257-amino-acid chain; its full sequence is Snake venom serine protease CL5 (257 aa).

The signal sequence occupies residues 1 to 18 (MVLIRVLANLLILQLSYA). The propeptide occupies 19–24 (QRSSEL). One can recognise a Peptidase S1 domain in the interval 25–248 (VIGGDECNIN…HLDWIQSIIA (224 aa)). Disulfide bonds link Cys31–Cys162, Cys49–Cys65, Cys141–Cys209, Cys173–Cys188, and Cys199–Cys224. His64 serves as the catalytic Charge relay system. N-linked (GlcNAc...) asparagine glycosylation is found at Asn78 and Asn102. Asp109 functions as the Charge relay system in the catalytic mechanism. N-linked (GlcNAc...) asparagine glycans are attached at residues Asn153 and Asn169. The active-site Charge relay system is the Ser203. N-linked (GlcNAc...) asparagine glycosylation occurs at Asn250.

This sequence belongs to the peptidase S1 family. Snake venom subfamily. As to quaternary structure, monomer. In terms of tissue distribution, expressed by the venom gland.

The protein localises to the secreted. Snake venom serine protease that may act in the hemostasis system of the prey. The chain is Snake venom serine protease CL5 from Trimeresurus stejnegeri (Chinese green tree viper).